The sequence spans 365 residues: GTPase Obg (365 aa).

An Obg domain is found at 1–177 (MFTDYVRILA…GQFLLELKTI (177 aa)). Residues 64–85 (QFAEDGQPGKGQKRKGRDGKNL) are disordered. The 171-residue stretch at 178-348 (ADVGFVGLPN…FLNSCRKSFE (171 aa)) folds into the OBG-type G domain. GTP-binding positions include 184–191 (GLPNSGKS), 209–213 (FTTLK), 231–234 (DIPG), 300–303 (NKVD), and 329–331 (SAL). The Mg(2+) site is built by Ser-191 and Thr-211.

It belongs to the TRAFAC class OBG-HflX-like GTPase superfamily. OBG GTPase family. Monomer. Mg(2+) serves as cofactor.

Its subcellular location is the cytoplasm. Its function is as follows. An essential GTPase which binds GTP, GDP and possibly (p)ppGpp with moderate affinity, with high nucleotide exchange rates and a fairly low GTP hydrolysis rate. Plays a role in control of the cell cycle, stress response, ribosome biogenesis and in those bacteria that undergo differentiation, in morphogenesis control. The polypeptide is GTPase Obg (Methylacidiphilum infernorum (isolate V4) (Methylokorus infernorum (strain V4))).